The primary structure comprises 298 residues: Glycine--tRNA ligase alpha subunit (298 aa).

This sequence belongs to the class-II aminoacyl-tRNA synthetase family. As to quaternary structure, tetramer of two alpha and two beta subunits.

The protein localises to the cytoplasm. It carries out the reaction tRNA(Gly) + glycine + ATP = glycyl-tRNA(Gly) + AMP + diphosphate. In Helicobacter pylori (strain J99 / ATCC 700824) (Campylobacter pylori J99), this protein is Glycine--tRNA ligase alpha subunit (glyQ).